The sequence spans 288 residues: GTP-binding protein 8 (288 aa).

Positions 109 to 282 (HRPEVCFIGR…RCFIADITGN (174 aa)) constitute an EngB-type G domain. Residues 117 to 124 (GRSNVGKS), 146 to 150 (GHTKK), 164 to 167 (DMPG), 226 to 229 (TKID), and 261 to 263 (VSA) contribute to the GTP site. Positions 124 and 148 each coordinate Mg(2+).

Belongs to the TRAFAC class TrmE-Era-EngA-EngB-Septin-like GTPase superfamily. EngB GTPase family. The cofactor is Mg(2+).

This is GTP-binding protein 8 (GTPBP8) from Bos taurus (Bovine).